We begin with the raw amino-acid sequence, 171 residues long: RNA pyrophosphohydrolase (171 aa).

A Nudix hydrolase domain is found at Gly6–Lys149. A Nudix box motif is present at residues Gly39 to Gly60.

It belongs to the Nudix hydrolase family. RppH subfamily. A divalent metal cation serves as cofactor.

Accelerates the degradation of transcripts by removing pyrophosphate from the 5'-end of triphosphorylated RNA, leading to a more labile monophosphorylated state that can stimulate subsequent ribonuclease cleavage. The protein is RNA pyrophosphohydrolase of Teredinibacter turnerae (strain ATCC 39867 / T7901).